A 51-amino-acid polypeptide reads, in one-letter code: Photosystem I reaction center subunit IX (51 aa).

Residues 17 to 37 (FFSTAPVIALVFFTLTAGFLV) traverse the membrane as a helical segment.

It belongs to the PsaJ family.

It is found in the cellular thylakoid membrane. Its function is as follows. May help in the organization of the PsaE and PsaF subunits. The protein is Photosystem I reaction center subunit IX of Acaryochloris marina (strain MBIC 11017).